The primary structure comprises 429 residues: 4-hydroxyphenylacetate degradation bifunctional isomerase/decarboxylase (429 aa).

2 Approximate repeats span residues 1–215 (MKGT…NQTF) and 216–429 (TWPL…ESAN). A divalent metal cation-binding residues include E276, E278, and D307.

This sequence belongs to the FAH family. In terms of assembly, monomer. Mg(2+) serves as cofactor.

It catalyses the reaction (2E,4Z)-5-hydroxypenta-2,4-diene-1,2,5-tricarboxylate = (3E,5R)-5-carboxy-2-oxohept-3-enedioate. The enzyme catalyses (3E,5R)-5-carboxy-2-oxohept-3-enedioate + H(+) = (4Z)-2-oxohept-4-enedioate + CO2. The protein operates within aromatic compound metabolism; 4-hydroxyphenylacetate degradation; pyruvate and succinate semialdehyde from 4-hydroxyphenylacetate: step 4/7. It participates in aromatic compound metabolism; 4-hydroxyphenylacetate degradation; pyruvate and succinate semialdehyde from 4-hydroxyphenylacetate: step 5/7. Functionally, decarboxylates OPET (5-oxo-pent-3-ene-1,2,5-tricarboxylic acid) into HHDD (2-hydroxy-hept-2,4-diene-1,7-dioate) and isomerizes it to OHED (2-oxo-hept-3-ene-1,7-dioate). The chain is 4-hydroxyphenylacetate degradation bifunctional isomerase/decarboxylase (hpaG) from Salmonella dublin.